The sequence spans 94 residues: Small ribosomal subunit protein bS6 (94 aa).

It belongs to the bacterial ribosomal protein bS6 family.

Functionally, binds together with bS18 to 16S ribosomal RNA. In Alkaliphilus oremlandii (strain OhILAs) (Clostridium oremlandii (strain OhILAs)), this protein is Small ribosomal subunit protein bS6.